An 810-amino-acid polypeptide reads, in one-letter code: Lon protease (810 aa).

Residues Leu40 to Ile233 form the Lon N-terminal domain. Gly385–Thr392 is a binding site for ATP. Residues Leu621–Gly802 form the Lon proteolytic domain. Active-site residues include Ser708 and Lys751.

Belongs to the peptidase S16 family. In terms of assembly, homohexamer. Organized in a ring with a central cavity.

It localises to the cytoplasm. The enzyme catalyses Hydrolysis of proteins in presence of ATP.. Its function is as follows. ATP-dependent serine protease that mediates the selective degradation of mutant and abnormal proteins as well as certain short-lived regulatory proteins. Required for cellular homeostasis and for survival from DNA damage and developmental changes induced by stress. Degrades polypeptides processively to yield small peptide fragments that are 5 to 10 amino acids long. Binds to DNA in a double-stranded, site-specific manner. This Methylocella silvestris (strain DSM 15510 / CIP 108128 / LMG 27833 / NCIMB 13906 / BL2) protein is Lon protease.